We begin with the raw amino-acid sequence, 423 residues long: Serine--tRNA ligase (423 aa).

Residues 1-12 (MIDLKALRENPD) show a composition bias toward basic and acidic residues. The tract at residues 1 to 26 (MIDLKALRENPDVGRASQRSRGEDPE) is disordered. An L-serine-binding site is contributed by 230 to 232 (TSE). Residues 261 to 263 (RRE) and valine 277 each bind ATP. L-serine is bound at residue glutamate 284. Residue 348-351 (ELTS) participates in ATP binding. Residue threonine 383 coordinates L-serine.

This sequence belongs to the class-II aminoacyl-tRNA synthetase family. Type-1 seryl-tRNA synthetase subfamily. Homodimer. The tRNA molecule binds across the dimer.

It is found in the cytoplasm. The enzyme catalyses tRNA(Ser) + L-serine + ATP = L-seryl-tRNA(Ser) + AMP + diphosphate + H(+). It catalyses the reaction tRNA(Sec) + L-serine + ATP = L-seryl-tRNA(Sec) + AMP + diphosphate + H(+). It functions in the pathway aminoacyl-tRNA biosynthesis; selenocysteinyl-tRNA(Sec) biosynthesis; L-seryl-tRNA(Sec) from L-serine and tRNA(Sec): step 1/1. In terms of biological role, catalyzes the attachment of serine to tRNA(Ser). Is also able to aminoacylate tRNA(Sec) with serine, to form the misacylated tRNA L-seryl-tRNA(Sec), which will be further converted into selenocysteinyl-tRNA(Sec). This is Serine--tRNA ligase from Beutenbergia cavernae (strain ATCC BAA-8 / DSM 12333 / CCUG 43141 / JCM 11478 / NBRC 16432 / NCIMB 13614 / HKI 0122).